The sequence spans 118 residues: Inner membrane protein YhaI (118 aa).

The Periplasmic segment spans residues 1 to 25 (MQWYLSVLKNYVGFSGRARRKEYWM). The helical transmembrane segment at 26-46 (FTLINAIVGAIINVIQLILGL) threads the bilayer. Position 47 (E47) is a topological domain, cytoplasmic. Residues 48-68 (LPYLSMLYLLATFLPVLALAI) traverse the membrane as a helical segment. Residues 69–77 (RRLHDTDRS) lie on the Periplasmic side of the membrane. Residues 78 to 98 (GAWALLFFVPFIGWLVLLVFF) form a helical membrane-spanning segment. The Cytoplasmic segment spans residues 99–118 (CTEGTSGSNRYGNDPKFGSN).

To E.coli YhaH.

The protein localises to the cell inner membrane. This Escherichia coli O157:H7 protein is Inner membrane protein YhaI (yhaI).